Consider the following 205-residue polypeptide: Latherin (205 aa).

A disulfide bridge links Cys-133 with Cys-176.

This sequence belongs to the BPI/LBP/Plunc superfamily. Plunc family. As to quaternary structure, monomer.

It is found in the secreted. Its function is as follows. Major protein in sweat, has surfactant properties. This chain is Latherin (LATH), found in Equus quagga burchellii (Burchell's zebra).